A 170-amino-acid chain; its full sequence is Cathelicidin antimicrobial peptide (170 aa).

A signal peptide spans 1-30; sequence MNTQWDSPSLGRWSLVLLLLGLVMPLAIVA. Positions 31-131 are cleaved as a propeptide — cathelin-like domain (CLD); sequence QVLSYQEAVL…DISCDKDKRK (101 aa). 2 disulfide bridges follow: Cys-86–Cys-97 and Cys-108–Cys-125. Residues 150 to 162 are active core; the sequence is LKNIGQRIKDFFG.

It belongs to the cathelicidin family. As to quaternary structure, monomer, homodimer or homotrimer (in vitro). Oligomerizes as tetra- or hexamer in solution (in vitro). Proteolytically cleaved by proteinase PRTN3 into antibacterial peptide LL-37. Proteolytically cleaved by cathepsin CTSG and neutrophil elastase ELANE. Post-translationally, resistant to proteolytic degradation in solution, and when bound to both zwitterionic (mimicking mammalian membranes) and negatively charged membranes (mimicking bacterial membranes). In terms of processing, after secretion onto the skin surface, the CAMP gene product is processed by a serine protease-dependent mechanism into multiple novel antimicrobial peptides distinct from and shorter than cathelicidin LL-37. These peptides show enhanced antimicrobial action, acquiring the ability to kill skin pathogens such as S.aureus, E.coli and C.albicans. These peptides have lost the ability to stimulate CXCL8/IL8 release from keratinocytes. The peptides act synergistically, killing bacteria at lower concentrations when present together, and maintain activity at increased salt condition.

Its subcellular location is the secreted. The protein localises to the vesicle. Antimicrobial protein that is an integral component of the innate immune system. Binds to bacterial lipopolysaccharides (LPS). Acts via neutrophil N-formyl peptide receptors to enhance the release of CXCL2. Postsecretory processing generates multiple cathelicidin antimicrobial peptides with various lengths which act as a topical antimicrobial defense in sweat on skin. The unprocessed precursor form, cathelicidin antimicrobial peptide, inhibits the growth of Gram-negative E.coli and E.aerogenes with efficiencies comparable to that of the mature peptide LL-37 (in vitro). Functionally, antimicrobial peptide that is an integral component of the innate immune system. Binds to bacterial lipopolysaccharides (LPS). Causes membrane permeabilization by forming transmembrane pores (in vitro). Causes lysis of E.coli. Exhibits antimicrobial activity against Gram-negative bacteria such as P.aeruginosa, S.typhimurium, E.aerogenes, E.coli and P.syringae, Gram-positive bacteria such as L.monocytogenes, S.epidermidis, S.pyogenes and S.aureus, as well as vancomycin-resistant enterococci (in vitro). Exhibits antimicrobial activity against methicillin-resistant S.aureus, P.mirabilis, and C.albicans in low-salt media, but not in media containing 100 mM NaCl (in vitro). Forms chiral supramolecular assemblies with quinolone signal (PQS) molecules of P.aeruginosa, which may lead to interference of bacterial quorum signaling and perturbance of bacterial biofilm formation. May form supramolecular fiber-like assemblies on bacterial membranes. Induces cytokine and chemokine producation as well as TNF/TNFA and CSF2/GMCSF production in normal human keratinocytes. Exhibits hemolytic activity against red blood cells. In terms of biological role, exhibits antimicrobial activity against E.coli and B.megaterium (in vitro). The chain is Cathelicidin antimicrobial peptide from Ateles fusciceps (Brown-headed spider monkey).